The chain runs to 100 residues: Small ribosomal subunit protein uS14c (100 aa).

It belongs to the universal ribosomal protein uS14 family. In terms of assembly, part of the 30S ribosomal subunit.

The protein localises to the plastid. Its subcellular location is the chloroplast. Binds 16S rRNA, required for the assembly of 30S particles. This chain is Small ribosomal subunit protein uS14c, found in Rhodomonas salina (Cryptomonas salina).